The chain runs to 648 residues: Adhesion G-protein coupled receptor G1 (648 aa).

An N-terminal signal peptide occupies residues 1–24 (MKQNPAKTARMWIIICLLFVLGQA). At 25–370 (TDNDRDFKMC…STVRHLKALT (346 aa)) the chain is on the extracellular side. Cys34 and Cys96 form a disulfide bridge. N-linked (GlcNAc...) asparagine glycosylation is found at Asn62, Asn91, Asn114, Asn146, Asn222, Asn262, and Asn286. Cys127 and Cys176 form a disulfide bridge. The GAIN-B domain occupies 214 to 361 (MDEEFTGHNF…AILVQVEQKS (148 aa)). Intrachain disulfides connect Cys313–Cys343 and Cys331–Cys345. Residues 313-361 (CVSWDTKQDNEVNWKDDGCDTVKINEEQTECHCNHLTYFAILVQVEQKS) are GPS. The tract at residues 349 to 361 (TYFAILVQVEQKS) is stachel. The helical transmembrane segment at 371-391 (FITAVGCAVSLVSCLVLFYWL) threads the bilayer. The Cytoplasmic portion of the chain corresponds to 392-408 (CKRRRGKKNQISLVHRG). The chain crosses the membrane as a helical span at residues 409–429 (LVVAIFLLCLFFILTGILANV). Residues 430–443 (ANETVCQLTGSLLH) are Extracellular-facing. A glycan (N-linked (GlcNAc...) asparagine) is linked at Asn431. A helical membrane pass occupies residues 444–464 (YGLLSTLCWMAMEVFHTFLLV). The Cytoplasmic segment spans residues 465–471 (RKVFNSP). Residues 472 to 492 (LPIWIFYLMGFGFPFLLVSIL) traverse the membrane as a helical segment. At 493–530 (LSVGDIYGERKIKPSDDVNNPYRMCWMTEGDKSQLAHY) the chain is on the extracellular side. Residues 531–551 (IINIGLLAVVVSSGLVMLFLV) form a helical membrane-spanning segment. The Cytoplasmic segment spans residues 552-563 (VREIRNRPDWKK). Residues 564-586 (IHVAFLSIWGLTCLYGTTWALGF) form a helical membrane-spanning segment. At 587-595 (LDFGPFSEV) the chain is on the extracellular side. The chain crosses the membrane as a helical span at residues 596-618 (TLFLFCIINSLQGFFLMLRYYAL). The Cytoplasmic portion of the chain corresponds to 619 to 648 (ERMKKKDVSSSDGSSSGSSKQHMLQTNEKS).

This sequence belongs to the G-protein coupled receptor 2 family. LN-TM7 subfamily. As to quaternary structure, heterodimer of 2 chains generated by proteolytic processing; the large extracellular N-terminal fragment (ADGRG1 NT) and the membrane-bound C-terminal fragment (ADGRG1-CT) predominantly remain associated and non-covalently linked. Post-translationally, autoproteolytically cleaved into 2 fragments; the large extracellular N-terminal fragment (ADGRG1 NT) and the membrane-bound C-terminal fragment (ADGRG1 CT) predominantly remain associated and non-covalently linked.

It is found in the cell membrane. With respect to regulation, forms a heterodimer of 2 chains generated by proteolytic processing that remain associated through non-covalent interactions mediated by the GAIN-B domain. In the inactivated receptor, the Stachel sequence (also named stalk) is embedded in the GAIN-B domain, where it adopts a beta-strand conformation. On activation, the Stachel moves into the 7 transmembrane region and adopts a twisted hook-shaped configuration that forms contacts within the receptor, leading to coupling of a G-alpha protein, which activates signaling. The cleaved GAIN-B and N-terminal domains can then dissociate from the rest of the receptor. Functionally, adhesion G-protein coupled receptor (aGPCR), which is involved in oligodendrocyte development and maintenance of peripheral myelin. Ligand binding causes a conformation change that triggers signaling via guanine nucleotide-binding proteins (G proteins) and modulates the activity of downstream effectors, such as RhoA pathway. Adgrg1 is coupled to G(12) and/or G(13) G proteins (gna12 and gna13, respectively) and mediates the activation Rho small GTPases. Adgrg1-dependent RhoA signaling promotes timely radial sorting of axons. Required to establish proper myelin thickness and facilitate organization of the myelin sheath in the mature peripheral nervous system. The polypeptide is Adhesion G-protein coupled receptor G1 (Danio rerio (Zebrafish)).